The following is a 325-amino-acid chain: Glutarate 2-hydroxylase (325 aa).

Fe cation-binding residues include histidine 160, aspartate 162, and histidine 292.

It belongs to the glutarate hydroxylase family. In terms of assembly, homotetramer. Requires Fe(2+) as cofactor.

The catalysed reaction is glutarate + 2-oxoglutarate + O2 = (S)-2-hydroxyglutarate + succinate + CO2. The protein operates within amino-acid degradation. Functionally, acts as an alpha-ketoglutarate-dependent dioxygenase catalyzing hydroxylation of glutarate (GA) to L-2-hydroxyglutarate (L2HG). Functions in a L-lysine degradation pathway that proceeds via cadaverine, glutarate and L-2-hydroxyglutarate. The protein is Glutarate 2-hydroxylase of Escherichia coli (strain UTI89 / UPEC).